The following is a 598-amino-acid chain: Elongation factor 4 (598 aa).

The tr-type G domain occupies 2–184 (KNIRNFSIIA…EIVHKIPAPE (183 aa)). Residues 14–19 (DHGKST) and 131–134 (NKID) each bind GTP.

It belongs to the TRAFAC class translation factor GTPase superfamily. Classic translation factor GTPase family. LepA subfamily.

The protein localises to the cell inner membrane. The catalysed reaction is GTP + H2O = GDP + phosphate + H(+). Its function is as follows. Required for accurate and efficient protein synthesis under certain stress conditions. May act as a fidelity factor of the translation reaction, by catalyzing a one-codon backward translocation of tRNAs on improperly translocated ribosomes. Back-translocation proceeds from a post-translocation (POST) complex to a pre-translocation (PRE) complex, thus giving elongation factor G a second chance to translocate the tRNAs correctly. Binds to ribosomes in a GTP-dependent manner. The protein is Elongation factor 4 of Pasteurella multocida (strain Pm70).